Consider the following 201-residue polypeptide: Large ribosomal subunit protein uL4 (201 aa).

Residues Ala45 to Gly66 form a disordered region.

Belongs to the universal ribosomal protein uL4 family. Part of the 50S ribosomal subunit.

In terms of biological role, one of the primary rRNA binding proteins, this protein initially binds near the 5'-end of the 23S rRNA. It is important during the early stages of 50S assembly. It makes multiple contacts with different domains of the 23S rRNA in the assembled 50S subunit and ribosome. Forms part of the polypeptide exit tunnel. This chain is Large ribosomal subunit protein uL4, found in Aeromonas salmonicida (strain A449).